Reading from the N-terminus, the 240-residue chain is MIEFKNVSKHFGPTQVLHNIDLNIAQGEVVVIIGPSGSGKSTLLRCINKLEEITSGDLIVDGLKVNDPKVDERLIRQEAGMVFQQFYLFPHLTALENVMFGPLRVRGANKEEAEKLARELLAKVGLAERAHHYPSELSGGQQQRVAIARALAVKPKMMLFDEPTSALDPELRHEVLKVMQDLAEEGMTMVIVTHEIGFAEKVASRLIFIDKGRIAEDGNPQVLIKNPPSQRLQEFLQHVS.

An ABC transporter domain is found at 2–236; it reads IEFKNVSKHF…PPSQRLQEFL (235 aa). 34 to 41 contributes to the ATP binding site; the sequence is GPSGSGKS.

It belongs to the ABC transporter superfamily. As to quaternary structure, heterotetramer with 2 subunits of GlnQ and 2 subunits of GlnP.

It localises to the cell inner membrane. Its function is as follows. Part of the binding-protein-dependent transport system for glutamine. Probably responsible for energy coupling to the transport system. The sequence is that of Glutamine transport ATP-binding protein GlnQ (glnQ) from Escherichia coli (strain K12).